A 33-amino-acid chain; its full sequence is Photosystem II reaction center protein Psb30 (33 aa).

A helical membrane pass occupies residues 5-25; it reads VIAQLTVLALIVISGPLVIAL.

This sequence belongs to the Psb30/Ycf12 family. As to quaternary structure, PSII is composed of 1 copy each of membrane proteins PsbA, PsbB, PsbC, PsbD, PsbE, PsbF, PsbH, PsbI, PsbJ, PsbK, PsbL, PsbM, PsbT, PsbX, PsbY, PsbZ, Psb30/Ycf12, peripheral proteins of the oxygen-evolving complex and a large number of cofactors. It forms dimeric complexes.

The protein resides in the plastid. The protein localises to the chloroplast thylakoid membrane. In terms of biological role, a core subunit of photosystem II (PSII), probably helps stabilize the reaction center. The chain is Photosystem II reaction center protein Psb30 from Huperzia lucidula (Shining clubmoss).